Reading from the N-terminus, the 815-residue chain is Phenylalanine--tRNA ligase beta subunit (815 aa).

In terms of domain architecture, tRNA-binding spans 40 to 155 (APPFDKIVVA…EDAPVGQNIR (116 aa)). Residues 406–485 (PQRRPVSLRL…RIYGFERIAA (80 aa)) form the B5 domain. Residues D463, D469, E472, and E473 each contribute to the Mg(2+) site. The FDX-ACB domain maps to 712 to 814 (SKFPAAVRDL…LGEAFQARLR (103 aa)).

Belongs to the phenylalanyl-tRNA synthetase beta subunit family. Type 1 subfamily. In terms of assembly, tetramer of two alpha and two beta subunits. The cofactor is Mg(2+).

The protein resides in the cytoplasm. It carries out the reaction tRNA(Phe) + L-phenylalanine + ATP = L-phenylalanyl-tRNA(Phe) + AMP + diphosphate + H(+). The sequence is that of Phenylalanine--tRNA ligase beta subunit from Cupriavidus pinatubonensis (strain JMP 134 / LMG 1197) (Cupriavidus necator (strain JMP 134)).